A 626-amino-acid polypeptide reads, in one-letter code: Serine/threonine-protein kinase ATG1a (626 aa).

In terms of domain architecture, Protein kinase spans 10 to 268; that stretch reads YALGPRIGSG…FREFFNHMFL (259 aa). ATP contacts are provided by residues 16–24 and K39; that span reads IGSGSFAVV. D132 acts as the Proton acceptor in catalysis. The span at 288 to 308 shows a compositional bias: polar residues; sequence KSLLPSAQPSTSTNRFKSSAE. The segment at 288-347 is disordered; that stretch reads KSLLPSAQPSTSTNRFKSSAENVHKHGSSSSASNSQISMPHTSFEKTRKDTEGQCSSNQS. A compositionally biased stretch (low complexity) spans 315 to 325; the sequence is SSSSASNSQIS. Over residues 330-339 the composition is skewed to basic and acidic residues; the sequence is SFEKTRKDTE. The AIM (Atg8-family-interacting motif) signature appears at 360–363; sequence YVLV.

This sequence belongs to the protein kinase superfamily. Ser/Thr protein kinase family. Interacts with ATG13A. Interacts with ATG8E. Binds to ATG8E on autophagic vesicles. Post-translationally, phosphorylated during nutrient starvation. Dephosphorylated in nutrient-rich conditions.

Its subcellular location is the cytoplasmic vesicle. It is found in the autophagosome. Its function is as follows. Serine/threonine protein kinase involved in autophagy in a nutritional condition-dependent manner. The ATG1-ATG13 protein kinase complex regulates downstream events required for autophagosome enclosure and/or vacuolar delivery. Becomes a target of autophagy under nutrient starvation. Connects autophagy to plant nutritional status. The chain is Serine/threonine-protein kinase ATG1a from Arabidopsis thaliana (Mouse-ear cress).